Here is a 266-residue protein sequence, read N- to C-terminus: MLLLARPPKAWHRLFQLQPLALLGTPGGKTQHVRYQLFSTPGPADTGRQGQPQGPGLRTRLLVTALVGAGLGGAWLALRAEKERGRQQQRTEALRQAAVGQGDFSLLDHRGRVRCKADFRGQWVLLYFGFTHCPDICPDELEKLVQVVRQLEAEPGLPPVQPLFITVDPERDTVAAMARYVQDFHPRLLGLTGSAEQIAQVSRSYRVYYSAGPKDEDQDYIVDHSIAIYLLSPDGLFTDYYSRARSAEQITDSVRRHMAAFRSVLR.

The N-terminal 41 residues, 1–41 (MLLLARPPKAWHRLFQLQPLALLGTPGGKTQHVRYQLFSTP), are a transit peptide targeting the mitochondrion. Residues 42–60 (GPADTGRQGQPQGPGLRTR) are Mitochondrial matrix-facing. Residues 61–78 (LLVTALVGAGLGGAWLAL) form a helical membrane-spanning segment. The Mitochondrial intermembrane segment spans residues 79 to 266 (RAEKERGRQQ…HMAAFRSVLR (188 aa)). The Thioredoxin domain occupies 85–259 (GRQQQRTEAL…ITDSVRRHMA (175 aa)). Cu cation is bound by residues C133, C137, and H224. A disulfide bond links C133 and C137.

Belongs to the SCO1/2 family. As to quaternary structure, homodimer. Interacts with COA6. Found in a complex with TMEM177, COX20, COA6, MT-CO2/COX2, COX18 and SCO1. Interacts with TMEM177 in a COX20-dependent manner. Interacts with COX20 in a MT-CO2/COX2- and COX18-dependent manner. Interacts with COX16.

It localises to the mitochondrion inner membrane. In terms of biological role, copper metallochaperone essential for the synthesis and maturation of cytochrome c oxidase subunit II (MT-CO2/COX2) by facilitating the incorporation of copper into the Cu(A) site of MT-CO2/COX2. Could also act as a thiol-disulfide oxidoreductase to regulate the redox state of the cysteines in SCO1 during maturation of MT-CO2/COX2. In Bos taurus (Bovine), this protein is Protein SCO2 homolog, mitochondrial (SCO2).